The chain runs to 1058 residues: Carbamoyl phosphate synthase large chain (1058 aa).

The carboxyphosphate synthetic domain stretch occupies residues 1-401 (MPKRTDIQKI…SLLKACRSLE (401 aa)). The ATP site is built by arginine 129, arginine 169, glycine 175, glycine 176, arginine 208, isoleucine 210, glutamate 215, glycine 241, isoleucine 242, histidine 243, glutamine 284, and glutamate 298. Positions 133–327 (KQLMEELEQP…IAKLAAKIAV (195 aa)) constitute an ATP-grasp 1 domain. The Mg(2+) site is built by glutamine 284, glutamate 298, and asparagine 300. The Mn(2+) site is built by glutamine 284, glutamate 298, and asparagine 300. The tract at residues 402–546 (IGVHHNEIPE…YSTYGWENES (145 aa)) is oligomerization domain. Residues 547–929 (IRSDKESVLV…ALYKAFEASY (383 aa)) form a carbamoyl phosphate synthetic domain region. The ATP-grasp 2 domain occupies 671–861 (EQALKELDIP…MAQVATKLIL (191 aa)). ATP-binding residues include arginine 707, serine 746, isoleucine 748, glutamate 752, glycine 777, valine 778, histidine 779, serine 780, glutamine 820, and glutamate 832. The Mg(2+) site is built by glutamine 820, glutamate 832, and asparagine 834. Positions 820, 832, and 834 each coordinate Mn(2+). The region spanning 930–1058 (LHLPTFGNVV…ESRSFVTEAI (129 aa)) is the MGS-like domain. The segment at 930–1058 (LHLPTFGNVV…ESRSFVTEAI (129 aa)) is allosteric domain.

It belongs to the CarB family. In terms of assembly, composed of two chains; the small (or glutamine) chain promotes the hydrolysis of glutamine to ammonia, which is used by the large (or ammonia) chain to synthesize carbamoyl phosphate. Tetramer of heterodimers (alpha,beta)4. It depends on Mg(2+) as a cofactor. The cofactor is Mn(2+).

It catalyses the reaction hydrogencarbonate + L-glutamine + 2 ATP + H2O = carbamoyl phosphate + L-glutamate + 2 ADP + phosphate + 2 H(+). It carries out the reaction hydrogencarbonate + NH4(+) + 2 ATP = carbamoyl phosphate + 2 ADP + phosphate + 2 H(+). It participates in amino-acid biosynthesis; L-arginine biosynthesis; carbamoyl phosphate from bicarbonate: step 1/1. It functions in the pathway pyrimidine metabolism; UMP biosynthesis via de novo pathway; (S)-dihydroorotate from bicarbonate: step 1/3. Its function is as follows. Large subunit of the glutamine-dependent carbamoyl phosphate synthetase (CPSase). CPSase catalyzes the formation of carbamoyl phosphate from the ammonia moiety of glutamine, carbonate, and phosphate donated by ATP, constituting the first step of 2 biosynthetic pathways, one leading to arginine and/or urea and the other to pyrimidine nucleotides. The large subunit (synthetase) binds the substrates ammonia (free or transferred from glutamine from the small subunit), hydrogencarbonate and ATP and carries out an ATP-coupled ligase reaction, activating hydrogencarbonate by forming carboxy phosphate which reacts with ammonia to form carbamoyl phosphate. This chain is Carbamoyl phosphate synthase large chain, found in Streptococcus pneumoniae (strain 70585).